Consider the following 2126-residue polypeptide: Phthioceranic/hydroxyphthioceranic acid synthase (2126 aa).

Residues 24–447 enclose the Ketosynthase family 3 (KS3) domain; that stretch reads VTPVAVIGMA…GTNVHAVVEQ (424 aa). The active-site Acyl-thioester intermediate; for beta-ketoacyl synthase activity is Cys196. Active-site for beta-ketoacyl synthase activity residues include His331 and His367. The linker domain (LD) stretch occupies residues 449–549; that stretch reads PQTEAQPHAA…VYQPAVGQDD (101 aa). Residues 550–849 form an acyltransferase (AT) region; that stretch reads RGPVWLFSGQ…VAALAGMRRE (300 aa). The active-site Acyl-ester intermediate; for acyltransferase activity is Ser641. The dehydratase (DH) stretch occupies residues 909–1191; the sequence is STVAVHPLLG…LAVCGLRIGT (283 aa). The N-terminal hotdog fold stretch occupies residues 914 to 1032; that stretch reads HPLLGAHVRL…RRASAVLQQV (119 aa). Residues 914–1198 form the PKS/mFAS DH domain; the sequence is HPLLGAHVRL…IGTGVSERDK (285 aa). The active-site Proton acceptor; for dehydratase activity is the His947. The C-terminal hotdog fold stretch occupies residues 1051 to 1198; it reads PCRVDGEDLR…IGTGVSERDK (148 aa). Asp1115 acts as the Proton donor; for dehydratase activity in catalysis. A pseudo beta-ketoacyl reductase (PsiKR) region spans residues 1227–1398; sequence KWLLISDCAA…SEEDETAWRD (172 aa). The enoylreductase (ER) stretch occupies residues 1426-1750; that stretch reads SGMRLQIRTP…EHTGKLVLHI (325 aa). Positions 1772 to 2019 are beta-ketoacyl reductase (KR); it reads GSYIITGGLG…AERSRFFEVF (248 aa). Residues 1780–1783, 1803–1806, 1831–1832, and 1904–1905 contribute to the NADP(+) site; these read LGGL, SRTQ, DI, and FS. The Carrier domain maps to 2040–2126; that stretch reads DEWPARLRQL…DAPAAALSSQ (87 aa). Ser2075 is modified (O-(pantetheine 4'-phosphoryl)serine).

Pantetheine 4'-phosphate is required as a cofactor.

The catalysed reaction is hexadecanoyl-[(hydroxy)phthioceranic acid synthase] + 7 (S)-methylmalonyl-CoA + 14 NADPH + 21 H(+) = C37-phthioceranyl-[(hydroxy)phthioceranic acid synthase] + 7 CO2 + 14 NADP(+) + 7 CoA + 7 H2O. It carries out the reaction hexadecanoyl-[(hydroxy)phthioceranic acid synthase] + 8 (S)-methylmalonyl-CoA + 16 NADPH + 24 H(+) = C40-phthioceranyl-[(hydroxy)phthioceranic acid synthase] + 8 CO2 + 16 NADP(+) + 8 CoA + 8 H2O. The polypeptide is Phthioceranic/hydroxyphthioceranic acid synthase (pks2) (Mycobacterium bovis (strain BCG / Pasteur 1173P2)).